The sequence spans 534 residues: Light-independent protochlorophyllide reductase subunit B (534 aa).

A [4Fe-4S] cluster-binding site is contributed by Asp36. The active-site Proton donor is the Asp274. 409-410 contacts substrate; it reads GL. Residues 426–446 are disordered; the sequence is DEAGPSHHGGKAVPASAPRAD.

The protein belongs to the ChlB/BchB/BchZ family. In terms of assembly, protochlorophyllide reductase is composed of three subunits; BchL, BchN and BchB. Forms a heterotetramer of two BchB and two BchN subunits. [4Fe-4S] cluster is required as a cofactor.

The catalysed reaction is chlorophyllide a + oxidized 2[4Fe-4S]-[ferredoxin] + 2 ADP + 2 phosphate = protochlorophyllide a + reduced 2[4Fe-4S]-[ferredoxin] + 2 ATP + 2 H2O. The protein operates within porphyrin-containing compound metabolism; bacteriochlorophyll biosynthesis (light-independent). Its function is as follows. Component of the dark-operative protochlorophyllide reductase (DPOR) that uses Mg-ATP and reduced ferredoxin to reduce ring D of protochlorophyllide (Pchlide) to form chlorophyllide a (Chlide). This reaction is light-independent. The NB-protein (BchN-BchB) is the catalytic component of the complex. This chain is Light-independent protochlorophyllide reductase subunit B, found in Cereibacter sphaeroides (strain ATCC 17029 / ATH 2.4.9) (Rhodobacter sphaeroides).